Here is a 221-residue protein sequence, read N- to C-terminus: Imidazoleglycerol-phosphate dehydratase (221 aa).

The protein belongs to the imidazoleglycerol-phosphate dehydratase family.

It catalyses the reaction D-erythro-1-(imidazol-4-yl)glycerol 3-phosphate = 3-(imidazol-4-yl)-2-oxopropyl phosphate + H2O. It participates in amino-acid biosynthesis; L-histidine biosynthesis; L-histidine from 5-phospho-alpha-D-ribose 1-diphosphate: step 6/9. The chain is Imidazoleglycerol-phosphate dehydratase (HIS3) from Kluyveromyces lactis (strain ATCC 8585 / CBS 2359 / DSM 70799 / NBRC 1267 / NRRL Y-1140 / WM37) (Yeast).